The following is a 100-amino-acid chain: Large ribosomal subunit protein eL30 (100 aa).

It belongs to the eukaryotic ribosomal protein eL30 family.

The sequence is that of Large ribosomal subunit protein eL30 from Methanococcus maripaludis (strain DSM 14266 / JCM 13030 / NBRC 101832 / S2 / LL).